Consider the following 237-residue polypeptide: Protein GrpE (237 aa).

Disordered regions lie at residues 1–52 and 200–237; these read MSGD…RLQQ and KVSMGPGPQSGASPSSAQSNDDSTATFQGEADPAEPGV. A compositionally biased stretch (polar residues) spans 27 to 40; it reads ASMNSDEGQPSAQS. The segment covering 204–218 has biased composition (low complexity); sequence GPGPQSGASPSSAQS.

It belongs to the GrpE family. In terms of assembly, homodimer.

The protein resides in the cytoplasm. In terms of biological role, participates actively in the response to hyperosmotic and heat shock by preventing the aggregation of stress-denatured proteins, in association with DnaK and GrpE. It is the nucleotide exchange factor for DnaK and may function as a thermosensor. Unfolded proteins bind initially to DnaJ; upon interaction with the DnaJ-bound protein, DnaK hydrolyzes its bound ATP, resulting in the formation of a stable complex. GrpE releases ADP from DnaK; ATP binding to DnaK triggers the release of the substrate protein, thus completing the reaction cycle. Several rounds of ATP-dependent interactions between DnaJ, DnaK and GrpE are required for fully efficient folding. The protein is Protein GrpE of Prochlorococcus marinus (strain MIT 9303).